A 56-amino-acid polypeptide reads, in one-letter code: U4-myrmicitoxin-Tb1a (56 aa).

The signal sequence occupies residues 1–26 (MQPSYLLLTFAIIFVMVIMYSPAVEA). A propeptide spanning residues 27–40 (KAGADADADAHADA) is cleaved from the precursor. Gly53 carries the glycine amide modification.

Contains 1 disulfide bond. As to expression, expressed by the venom gland.

It localises to the secreted. Its function is as follows. Venom protein with unknown function. Does not induce paralysis when a high dose is administered by intrathoracic injection into the blowfly Lucilia caesar. The sequence is that of U4-myrmicitoxin-Tb1a from Tetramorium bicarinatum (Tramp ant).